A 345-amino-acid chain; its full sequence is Phosphoribosylformylglycinamidine cyclo-ligase (345 aa).

The protein belongs to the AIR synthase family.

It localises to the cytoplasm. It carries out the reaction 2-formamido-N(1)-(5-O-phospho-beta-D-ribosyl)acetamidine + ATP = 5-amino-1-(5-phospho-beta-D-ribosyl)imidazole + ADP + phosphate + H(+). Its pathway is purine metabolism; IMP biosynthesis via de novo pathway; 5-amino-1-(5-phospho-D-ribosyl)imidazole from N(2)-formyl-N(1)-(5-phospho-D-ribosyl)glycinamide: step 2/2. This Shewanella sp. (strain MR-7) protein is Phosphoribosylformylglycinamidine cyclo-ligase.